Reading from the N-terminus, the 674-residue chain is UvrABC system protein C (674 aa).

One can recognise a GIY-YIG domain in the interval 16–95 (TNPGVYRFRD…IKEFKPRFNV (80 aa)). The region spanning 207-242 (KRFTNKLEKQMAAAVARLDYEQAARIRDDITALRKV) is the UVR domain.

This sequence belongs to the UvrC family. In terms of assembly, interacts with UvrB in an incision complex.

Its subcellular location is the cytoplasm. In terms of biological role, the UvrABC repair system catalyzes the recognition and processing of DNA lesions. UvrC both incises the 5' and 3' sides of the lesion. The N-terminal half is responsible for the 3' incision and the C-terminal half is responsible for the 5' incision. In Pseudarthrobacter chlorophenolicus (strain ATCC 700700 / DSM 12829 / CIP 107037 / JCM 12360 / KCTC 9906 / NCIMB 13794 / A6) (Arthrobacter chlorophenolicus), this protein is UvrABC system protein C.